The following is a 171-amino-acid chain: Large ribosomal subunit protein uL10 (171 aa).

It belongs to the universal ribosomal protein uL10 family. Part of the ribosomal stalk of the 50S ribosomal subunit. The N-terminus interacts with L11 and the large rRNA to form the base of the stalk. The C-terminus forms an elongated spine to which L12 dimers bind in a sequential fashion forming a multimeric L10(L12)X complex.

Forms part of the ribosomal stalk, playing a central role in the interaction of the ribosome with GTP-bound translation factors. This chain is Large ribosomal subunit protein uL10, found in Corynebacterium jeikeium (strain K411).